We begin with the raw amino-acid sequence, 276 residues long: TIMELESS-interacting protein (276 aa).

The interval 1–54 (MLEQEENGLFEIPDYEHVEDETFPPFPPPGSPERDPAEAEPDEGSGAPVPVPPK) is disordered. Positions 64 to 140 (LDATRLTSER…KEVQTCLKRI (77 aa)) are interaction with TIMELESS. Polar residues predominate over residues 217-243 (SNSQSLENDVTVEESSTGENQEESNGL). Residues 217-276 (SNSQSLENDVTVEESSTGENQEESNGLISADGPHDVPSASTQEEGQLEAEETQLDHPNLD) form a disordered region. Position 219 is a phosphoserine (S219). At T233 the chain carries Phosphothreonine.

The protein belongs to the CSM3 family. Interacts with TIMELESS, which impairs TIMELESS self-association (via N-terminus). Associates with the MCM2-7 complex. Interacts with RPA2, PRDX2.

It localises to the cytoplasm. The protein resides in the nucleus. Its function is as follows. Plays an important role in the control of DNA replication and the maintenance of replication fork stability. Important for cell survival after DNA damage or replication stress. May be specifically required for the ATR-CHEK1 pathway in the replication checkpoint induced by hydroxyurea or ultraviolet light. Forms a complex with TIMELESS and this complex regulates DNA replication processes under both normal and stress conditions, stabilizes replication forks and influences both CHEK1 phosphorylation and the intra-S phase checkpoint in response to genotoxic stress. The protein is TIMELESS-interacting protein (Tipin) of Rattus norvegicus (Rat).